Here is an 85-residue protein sequence, read N- to C-terminus: Small ribosomal subunit protein bS18A (85 aa).

The protein belongs to the bacterial ribosomal protein bS18 family. As to quaternary structure, part of the 30S ribosomal subunit. Forms a tight heterodimer with protein bS6.

In terms of biological role, binds as a heterodimer with protein bS6 to the central domain of the 16S rRNA, where it helps stabilize the platform of the 30S subunit. This is Small ribosomal subunit protein bS18A from Mycolicibacterium smegmatis (strain ATCC 700084 / mc(2)155) (Mycobacterium smegmatis).